Consider the following 354-residue polypeptide: Ubiquitin-conjugating enzyme E2 Z (354 aa).

The tract at residues M1–A21 is disordered. One can recognise a UBC core domain in the interval Q99–V253. Catalysis depends on C188, which acts as the Glycyl thioester intermediate. Residues N332–V354 are disordered. Residue S337 is modified to Phosphoserine.

This sequence belongs to the ubiquitin-conjugating enzyme family. Widely expressed. Highly in placenta, pancreas, spleen and testis.

It localises to the cytoplasm. The protein resides in the nucleus. The catalysed reaction is S-ubiquitinyl-[E1 ubiquitin-activating enzyme]-L-cysteine + [E2 ubiquitin-conjugating enzyme]-L-cysteine = [E1 ubiquitin-activating enzyme]-L-cysteine + S-ubiquitinyl-[E2 ubiquitin-conjugating enzyme]-L-cysteine.. The protein operates within protein modification; protein ubiquitination. In terms of biological role, catalyzes the covalent attachment of ubiquitin to other proteins. Specific substrate for UBA6, not charged with ubiquitin by UBE1. May be involved in apoptosis regulation. This Homo sapiens (Human) protein is Ubiquitin-conjugating enzyme E2 Z (UBE2Z).